A 63-amino-acid polypeptide reads, in one-letter code: Venom peptide 2b (63 aa).

The first 22 residues, M1–A22, serve as a signal peptide directing secretion. AXPX repeat units lie at residues A22–L25, A26–E29, A32–D35, A38–D41, and A44–E47. A propeptide spanning residues E23–A48 is cleaved from the precursor. L62 carries the post-translational modification Leucine amide.

The protein belongs to the MCD family. Mastoparan subfamily. Expressed by the venom gland.

Its subcellular location is the secreted. The protein resides in the target cell membrane. Functionally, antimicrobial peptide with strong and moderate activity against the fungi B.cinerea (MIC=5 uM) and C.albicans (MIC=100 uM), the Gram-negative bacterium E.coli (MIC=200 uM) and the Gram-positive bacterium S.aureus (MIC=25 uM). Shows cytolytic activity against insect cell lines. Has potent hemolytic activity against human erythrocytes (EC(50)=64 uM). In vivo, peptide injection in the vicinity of the head and thorax of lepidopteran larvae induces feeding disorder followed by death due to starvation. In Eumenes pomiformis (Potter wasp), this protein is Venom peptide 2b.